The chain runs to 409 residues: Microfibrillar-associated protein 3-like (409 aa).

Residues 1-28 (MGLLKSHLTVCLPPSVPFLILVSTLATA) form the signal peptide. Residues 29 to 148 (KSVTNSTLNG…TLRVIFTSGD (120 aa)) lie on the Extracellular side of the membrane. Asn-33, Asn-37, Asn-67, Asn-111, and Asn-135 each carry an N-linked (GlcNAc...) asparagine glycan. An Ig-like C2-type domain is found at 47–141 (PVIIARTDHI…GTINNTVTLR (95 aa)). A disulfide bond links Cys-68 and Cys-125. Residues 149 to 169 (MGVYYMVVCLVAFTIVMILNI) form a helical membrane-spanning segment. At 170-409 (TRLCMMSSHL…NTCIIYESHV (240 aa)) the chain is on the cytoplasmic side. Residue Tyr-287 is modified to Phosphotyrosine. Phosphoserine occurs at positions 298, 303, 306, and 307. The interval 319–392 (VSVHPQSKKD…LPPAHLETTE (74 aa)) is disordered. Residues 333–348 (QEGENLEVKDEEETEP) show a composition bias toward acidic residues. Positions 362 to 372 (DITTTELTSEE) are enriched in polar residues.

Its subcellular location is the cell membrane. The protein resides in the nucleus. The protein localises to the cytoplasm. May participate in the nuclear signaling of EGFR and MAPK1/ERK2. This chain is Microfibrillar-associated protein 3-like (Mfap3l), found in Rattus norvegicus (Rat).